The primary structure comprises 2863 residues: Lipopolysaccharide-responsive and beige-like anchor protein (2863 aa).

Disordered stretches follow at residues 1–35 (MASE…ALSL), 969–1005 (VGSQ…ESAS), and 1018–1039 (EMKA…ETLT). Ala2 is subject to N-acetylalanine. 3 positions are modified to phosphoserine: Ser10, Ser979, and Ser1003. Polar residues predominate over residues 985–1005 (FTTNGNENSSIEKTSSLESAS). Residues 1006–1053 (NIELQTTNTSYEEMKAEQENQELPDEGTLEETLTNETRNADDLEVSSD) adopt a coiled-coil conformation. Residues 1024–1034 (ENQELPDEGTL) are compositionally biased toward acidic residues. Phosphoserine is present on residues Ser1100, Ser1135, and Ser1139. The segment covering 1161–1176 (PVTEKQTDTETQDSKD) has biased composition (basic and acidic residues). Residues 1161 to 1193 (PVTEKQTDTETQDSKDSGIQTMTASGSSAMSPE) are disordered. The span at 1177 to 1193 (SGIQTMTASGSSAMSPE) shows a compositional bias: polar residues. Phosphoserine occurs at positions 1233, 1247, and 1261. A WD 1 repeat occupies 1301 to 1343 (STVFRIPEFNWSQMHQRLLTDLLFSIETDIQMWRSHSTKTVMD). Ser1488 and Ser1498 each carry phosphoserine. Residues 1531–1548 (FLALAVVYFISVLMVSKY) form a helical membrane-spanning segment. The span at 1586 to 1599 (LTTASVEESESTSS) shows a compositional bias: low complexity. 2 disordered regions span residues 1586–1668 (LTTA…KATP) and 1759–1789 (QASD…VSQD). The residue at position 1605 (Ser1605) is a Phosphoserine. Basic and acidic residues predominate over residues 1650-1664 (KSPETKNDRGNDLDT). A phosphoserine mark is found at Ser1767, Ser1770, and Ser2064. Positions 1769 to 1789 (GSRSSNAKLPSVPTVDSVSQD) are enriched in polar residues. Residues 2073 to 2181 (NLAGPVSLST…TVKKVVNYLP (109 aa)) enclose the BEACH-type PH domain. Residues 2200–2489 (ASPRQLFKAS…QLLIEPHPPR (290 aa)) enclose the BEACH domain. A Phosphoserine modification is found at Ser2496. 5 WD repeats span residues 2591–2633 (DQSI…LIQV), 2636–2679 (GHWD…SGIG), 2695–2735 (GHDY…RTLE), 2777–2816 (ETDD…QLFA), and 2819–2858 (GCDA…WHHE).

As to quaternary structure, interacts with TOM1 and TOLLIP. In terms of tissue distribution, ubiquitous.

Its subcellular location is the cell membrane. The protein resides in the endoplasmic reticulum membrane. It is found in the golgi apparatus. It localises to the trans-Golgi network membrane. The protein localises to the lysosome membrane. Involved in coupling signal transduction and vesicle trafficking to enable polarized secretion and/or membrane deposition of immune effector molecules. Involved in phagophore growth during mitophagy by regulating ATG9A trafficking to mitochondria. The protein is Lipopolysaccharide-responsive and beige-like anchor protein of Homo sapiens (Human).